Consider the following 306-residue polypeptide: Recombination-associated protein RdgC (306 aa).

Belongs to the RdgC family.

The protein localises to the cytoplasm. It localises to the nucleoid. Its function is as follows. May be involved in recombination. This is Recombination-associated protein RdgC from Pseudomonas paraeruginosa (strain DSM 24068 / PA7) (Pseudomonas aeruginosa (strain PA7)).